The chain runs to 456 residues: Histidinol dehydrogenase homolog (456 aa).

Residue His279 coordinates Zn(2+). Active-site proton acceptor residues include Glu347 and His348. Zn(2+) is bound at residue His440.

Belongs to the histidinol dehydrogenase family. Zn(2+) serves as cofactor.

The chain is Histidinol dehydrogenase homolog from Rhizobium meliloti (strain 1021) (Ensifer meliloti).